The primary structure comprises 932 residues: Protocadherin gamma-A2 (932 aa).

An N-terminal signal peptide occupies residues 1 to 28; the sequence is MAALQKLPHCRKLFLLCFLLATLWEARA. Cadherin domains lie at 29–133, 134–242, 243–347, 348–452, 453–562, and 570–682; these read GQIR…APRF, GVEE…APVF, TQPE…APEF, YMTS…APAF, SRTS…PPEI, and DGST…EPSA. Topologically, residues 29–692 are extracellular; it reads GQIRYSVREE…KPNDSDLTLY (664 aa). Asn-419 and Asn-545 each carry an N-linked (GlcNAc...) asparagine glycan. Asn-685 is a glycosylation site (N-linked (GlcNAc...) asparagine). The helical transmembrane segment at 693–713 threads the bilayer; that stretch reads LVVAVAAVSCVFLAFVIVLLA. The Cytoplasmic portion of the chain corresponds to 714–932; sequence HRLRRWHKSR…KKKSGKKEKK (219 aa). 2 disordered regions span residues 798–841 and 902–932; these read LEEE…WPNN and ATLT…KEKK. Positions 806 to 841 are enriched in polar residues; sequence FSQQAPPNTDWRFSQAQRPGTSGSQNGDDTGTWPNN. The segment covering 922-932 has biased composition (basic residues); that stretch reads NKKKSGKKEKK.

It localises to the cell membrane. Potential calcium-dependent cell-adhesion protein. May be involved in the establishment and maintenance of specific neuronal connections in the brain. The chain is Protocadherin gamma-A2 (PCDHGA2) from Pan troglodytes (Chimpanzee).